The primary structure comprises 5588 residues: Histone-lysine N-methyltransferase 2D (5588 aa).

A disordered region spans residues 1–61 (MDSQKPPAED…QKPPHDCSRG (61 aa)). The segment at 104–149 (GPCEAVLPKEDASQIGFPEGLTPAHLGEPGGHCWAHHWCAAWSAGV) adopts a C2HC pre-PHD-type 1; degenerate zinc-finger fold. PHD-type zinc fingers lie at residues 170-218 (QRCS…PEHS) and 270-323 (CPEC…CRLC). Residues 226–276 (EARCAVCEGPGQLCDLLFCTSCGHHYHGACLDTALTARKRASWQCPECKVC) form a PHD-type 2; degenerate zinc finger. An RING-type 1; atypical zinc finger spans residues 229-274 (CAVCEGPGQLCDLLFCTSCGHHYHGACLDTALTARKRASWQCPECK). The segment at 276 to 321 (CQSCRKPGNDSKMLVCETCDKGYHTFCLKPPMEDLPAHSWKCKTCR) adopts an RING-type 2; degenerate zinc-finger fold. Disordered stretches follow at residues 438–908 (MPLL…SPII) and 922–1315 (LEYP…DDDT). Residues 439-642 (PLLPPPEESP…VSRLSPPPEE (204 aa)) are 15 X 5 AA repeats of S/P-P-P-E/P-E/A. The segment covering 440–463 (LLPPPEESPLSPPPEESPTSPPPE) has biased composition (pro residues). A run of 4 repeats spans residues 442–446 (PPPEE), 460–464 (PPPEA), 469–473 (PPTEE), and 477–481 (SPPPE). The segment covering 464–475 (ASRLSPPTEESP) has biased composition (low complexity). Pro residues-rich tracts occupy residues 490-512 (GCPP…PLSP) and 519-560 (LSPP…PPPE). 4 consecutive repeat copies span residues 520–524 (SPPPE), 529–533 (SPPPE), 538–542 (SPPPE), and 547–551 (SPPPE). The span at 561–572 (ASRLFPPFEESP) shows a compositional bias: low complexity. Residues 573–614 (LSPPPEDSPLSPPPEASRLSPPPEDSPMSPPPEDSPMSPPPE) show a composition bias toward pro residues. 4 tandem repeats follow at residues 574 to 578 (SPPPE), 583 to 587 (SPPPE), 592 to 596 (SPPPE), and 610 to 614 (SPPPE). Over residues 619–636 (LPLPVLSHLSPLPEVSRL) the composition is skewed to low complexity. The stretch at 637 to 641 (SPPPE) is repeat 15. The segment covering 637–677 (SPPPEESPLSPPPEDSPASPPPEASRLSPPPEDSPASPPPE) has biased composition (pro residues). Residues 696–712 (DSLVSLPMEESPLSPLP) are compositionally biased toward low complexity. Phosphoserine is present on serine 727. Composition is skewed to low complexity over residues 735–755 (LCPQ…CLSP), 836–851 (PSQS…FSPS), and 876–893 (LPEE…LSPQ). Pro residues-rich tracts occupy residues 894–908 (LMPP…SPII), 959–973 (EPVP…PGSP), and 985–1012 (LPPP…PPAL). Over residues 1013–1023 (PLSVPSPLSPV) the composition is skewed to low complexity. Positions 1033–1045 (AELHEMETDKGPE) are enriched in basic and acidic residues. PHD-type zinc fingers lie at residues 1071–1124 (PSPA…PMEV), 1121–1171 (PMEV…SQGD), and 1198–1253 (LGVS…SPAR). At serine 1107 the chain carries Phosphoserine. Polar residues predominate over residues 1163 to 1172 (EISNLSQGDA). The RING-type 3; atypical zinc-finger motif lies at 1201–1251 (STDVSPARDEGSLRLCTDSLPETDDSLLCDTGTATSGGKAEGDKGRRRSSP). Residue serine 1205 is modified to Phosphoserine. At threonine 1223 the chain carries Phosphothreonine. Serine 1226 is subject to Phosphoserine. The span at 1245–1258 (GRRRSSPARSRIKQ) shows a compositional bias: basic residues. At serine 1562 the chain carries Phosphoserine. 4 disordered regions span residues 1566–1721 (KRRQ…SKLE), 1751–1846 (GRPG…MESK), 1886–1962 (GLAL…SLQR), and 2095–2641 (SADG…QRQR). Positions 1593–1608 (PDDKKDGDLDTDDLLK) are enriched in basic and acidic residues. Serine 1627 bears the Phosphoserine mark. Basic and acidic residues predominate over residues 1631-1641 (ELGKEETEESK). Composition is skewed to basic residues over residues 1658-1668 (RQRKSHTRVKR) and 1709-1718 (KQQRRARKKS). The span at 1762 to 1782 (PRADGGSDRKELMTAMHKGDD) shows a compositional bias: basic and acidic residues. Serine 1791 is modified (phosphoserine). The residue at position 1822 (threonine 1822) is a Phosphothreonine. Positions 1831–1846 (DLDRIPTEELPKMESK) are enriched in basic and acidic residues. Composition is skewed to low complexity over residues 1886–1896 (GLALGSLPSSS) and 1936–1947 (TTPSTPTTPTTE). Positions 2151–2166 (PTYPPYPSPTGAPAQP) are enriched in pro residues. Over residues 2170–2181 (GTTTRPGTGQPG) the composition is skewed to low complexity. Serine 2196 is modified (phosphoserine). Threonine 2197 carries the phosphothreonine modification. The residue at position 2203 (lysine 2203) is an N6-acetyllysine. Phosphoserine occurs at positions 2217 and 2231. The segment covering 2237-2249 (ESRKSLEVKKEEL) has biased composition (basic and acidic residues). 3 positions are modified to phosphoserine: serine 2266, serine 2268, and serine 2299. Pro residues-rich tracts occupy residues 2308–2322 (EPPP…PPSH) and 2331–2359 (YPDP…PPRS). Low complexity predominate over residues 2366–2388 (SRVPASPQSQSSSQSPLTPRPLS). Polar residues predominate over residues 2470–2486 (GQPTNFARSPGTGTFVG). Asymmetric dimethylarginine is present on arginine 2492. Residues 2504–2514 (LKPPVPQPGLP) show a composition bias toward pro residues. Residues 2546-2557 (PSGSPLGPNSGP) are compositionally biased toward low complexity. Serine 2597 bears the Phosphoserine mark. Positions 2610–2622 (SSSSLATPELSSA) are enriched in low complexity. Positions 2627–2665 (ISSLSQTELEKQRQRQRLRELLIRQQIQRNTLRQEKETA) form a coiled coil. The LXXLL motif 1 motif lies at 2644-2648 (LRELL). A disordered region spans residues 2655 to 2806 (RNTLRQEKET…QLWQQQQQQQ (152 aa)). Low complexity predominate over residues 2665-2680 (AAAAAGAVGPPGNWGA). Composition is skewed to polar residues over residues 2691-2704 (SRGQ…QDRS) and 2739-2748 (PSSMDMNSRQ). A coiled-coil region spans residues 2768–2813 (LQQQQQQQQQQQQQQQQQQQQQQQQQQQQQLWQQQQQQQQQQQQQA). Over residues 2769–2806 (QQQQQQQQQQQQQQQQQQQQQQQQQQQQQLWQQQQQQQ) the composition is skewed to low complexity. Asymmetric dimethylarginine is present on arginine 2829. The short motif at 3030 to 3034 (LDDLL) is the LXXLL motif 2 element. The disordered stretch occupies residues 3069-3104 (NEKAEREALLRGVEPVSLGPEERPPPAPDNSEPRLT). N6-acetyllysine is present on lysine 3071. Phosphoserine is present on residues serine 3122 and serine 3193. Disordered stretches follow at residues 3129 to 3193 (NTPK…LNPS) and 3271 to 3326 (QQQQ…QSMV). The segment covering 3271–3284 (QQQQQQQQQQQQQQ) has biased composition (low complexity). N6-acetyllysine is present on lysine 3430. Disordered stretches follow at residues 3460–3496 (SGGS…TFAQ), 3593–3617 (RNKQ…VLAV), 3633–3661 (LLPA…GGMV), and 3678–3704 (QQQQ…NLAL). Residues 3559 to 3613 (EKLKLVTEQQSKIQKQLDQVRKQQKEHTNLMAEYRNKQQQQQQQQQQQQQQQHSA) are a coiled coil. The span at 3596-3610 (QQQQQQQQQQQQQQQ) shows a compositional bias: low complexity. The stretch at 3712–3747 (RLLQERQLQLQQQRMQLAQKLQQQQQQQQQQQQQQH) forms a coiled coil. Position 3725 is an asymmetric dimethylarginine (arginine 3725). Disordered stretches follow at residues 3760–3780 (PGVQ…PSNH) and 3808–3827 (LQQQ…QGPH). Coiled coils occupy residues 3854 to 3883 (RLLT…QQQQ) and 3912 to 4052 (SLQQ…QVTL). Residues 4053-4249 (GPGLPVKPLQ…QGPPGAGVMP (197 aa)) form a disordered region. 3 stretches are compositionally biased toward low complexity: residues 4128–4159 (SQLL…PQPQ), 4172–4183 (GQQLGSGSSSES), and 4226–4240 (GSQP…QSGQ). Arginine 4255 is modified (asymmetric dimethylarginine). Position 4272 is a phosphoserine (serine 4272). The short motif at 4279–4283 (LQALL) is the LXXLL motif 3 element. The interval 4290-4452 (QSQAVRQTPP…SSLVPGHLDQ (163 aa)) is disordered. Residues 4294 to 4305 (VRQTPPFQEPGT) are compositionally biased toward polar residues. Residues 4307–4322 (PSPLQGLLGCQPQPGG) are compositionally biased toward low complexity. The short motif at 4310–4314 (LQGLL) is the LXXLL motif 4 element. A compositionally biased stretch (polar residues) spans 4379-4391 (QLPSPSAQLTPTH). Phosphoserine is present on serine 4410. Over residues 4432-4445 (DNLTEAQKPEQSSL) the composition is skewed to polar residues. An LXXLL motif 5 motif is present at residues 4514-4518 (LQKLL). The residue at position 4516 (lysine 4516) is an N6-acetyllysine. Disordered stretches follow at residues 4553–4596 (LQGT…EDGV), 4664–4716 (KNNL…EGAL), and 4729–4778 (AALP…QLGS). The segment covering 4670–4684 (PPTPPSSLPPTPPPS) has biased composition (pro residues). At serine 4789 the chain carries Phosphoserine. Residue lysine 4807 forms a Glycyl lysine isopeptide (Lys-Gly) (interchain with G-Cter in SUMO2) linkage. Lysine 4827 carries the post-translational modification N6-acetyllysine. The segment at 4829–4874 (KGSEVSVMLTVSAAAAKNLNGVMVAVAELLSMKIPNSYEVLFPDGP) adopts an RING-type 4; degenerate zinc-finger fold. Residues 4877–4908 (AGLEPKKGEAEGPGGKEKGLSGKGPDTGPDWL) form a disordered region. The span at 4879–4896 (LEPKKGEAEGPGGKEKGL) shows a compositional bias: basic and acidic residues. Lysine 4931 participates in a covalent cross-link: Glycyl lysine isopeptide (Lys-Gly) (interchain with G-Cter in SUMO2). The segment at 4956–5031 (QLSAPPPEEP…SEDSRPPRLK (76 aa)) is disordered. Pro residues predominate over residues 4959-4982 (APPPEEPSPPPSPLAPSPASPPAE). Over residues 5017–5027 (RPPEESEDSRP) the composition is skewed to basic and acidic residues. Residues 5041 to 5045 (LRLLL) carry the LXXLL motif 6 motif. The C2HC pre-PHD-type 2 zinc finger occupies 5080 to 5120 (NRRCCFCHEEGDGATDGPARLLNLDLDLWVHLNCALWSTEV). The segment at 5141 to 5188 (TKCSLCQRTGATSSCNRMRCPNVYHFACAIRAKCMFFKDKTMLCPVHK) adopts a PHD-type 7 zinc-finger fold. Residues 5226 to 5286 (LHMFRVGGLV…CCYRCSISEN (61 aa)) enclose the FYR N-terminal domain. The 86-residue stretch at 5287 to 5372 (NGRPEFVIKV…ESCQNYLFRY (86 aa)) folds into the FYR C-terminal domain. A WDR5 interaction motif (WIN) motif is present at residues 5388-5393 (GCARSE). The SET domain maps to 5448–5564 (NNVYLARSRI…KGEELTYDYQ (117 aa)). S-adenosyl-L-methionine-binding positions include tyrosine 5502 and 5525–5526 (NH). Residues cysteine 5528, cysteine 5576, cysteine 5578, and cysteine 5583 each coordinate Zn(2+). The Post-SET domain occupies 5572–5588 (HKIPCHCGAWNCRKWMN).

Belongs to the class V-like SAM-binding methyltransferase superfamily. Histone-lysine methyltransferase family. TRX/MLL subfamily. Component of the MLL2 complex (also named ASCOM complex), at least composed of catalytic subunit KMT2D/MLL2, ASH2L, RBBP5, WDR5, NCOA6, DPY30, KDM6A, PAXIP1/PTIP, PAGR1 and alpha- and beta-tubulin. Forms a core complex with the evolutionary conserved subcomplex WRAD composed of WDR5, RBBP5, ASH2L/ASH2 and DPY30 subunits; WRAD differentially stimulates the methyltransferase activity. Interacts with ESR1; interaction is direct. Interacts (via WIN motif) with WDR5.

The protein localises to the nucleus. The enzyme catalyses L-lysyl(4)-[histone H3] + S-adenosyl-L-methionine = N(6)-methyl-L-lysyl(4)-[histone H3] + S-adenosyl-L-homocysteine + H(+). Its function is as follows. Histone methyltransferase that catalyzes methyl group transfer from S-adenosyl-L-methionine to the epsilon-amino group of 'Lys-4' of histone H3 (H3K4). Part of chromatin remodeling machinery predominantly forms H3K4me1 methylation marks at active chromatin sites where transcription and DNA repair take place. Acts as a coactivator for estrogen receptor by being recruited by ESR1, thereby activating transcription. This Mus musculus (Mouse) protein is Histone-lysine N-methyltransferase 2D (Kmt2d).